A 416-amino-acid chain; its full sequence is UDP-N-acetylglucosamine 1-carboxyvinyltransferase (416 aa).

22–23 (KN) serves as a coordination point for phosphoenolpyruvate. Arg92 lines the UDP-N-acetyl-alpha-D-glucosamine pocket. Cys116 functions as the Proton donor in the catalytic mechanism. At Cys116 the chain carries 2-(S-cysteinyl)pyruvic acid O-phosphothioketal. Residues 121-125 (RPVDQ), Asp304, and Ile326 contribute to the UDP-N-acetyl-alpha-D-glucosamine site.

The protein belongs to the EPSP synthase family. MurA subfamily.

It is found in the cytoplasm. The enzyme catalyses phosphoenolpyruvate + UDP-N-acetyl-alpha-D-glucosamine = UDP-N-acetyl-3-O-(1-carboxyvinyl)-alpha-D-glucosamine + phosphate. It functions in the pathway cell wall biogenesis; peptidoglycan biosynthesis. Its function is as follows. Cell wall formation. Adds enolpyruvyl to UDP-N-acetylglucosamine. The sequence is that of UDP-N-acetylglucosamine 1-carboxyvinyltransferase from Cupriavidus metallidurans (strain ATCC 43123 / DSM 2839 / NBRC 102507 / CH34) (Ralstonia metallidurans).